We begin with the raw amino-acid sequence, 496 residues long: UDP-N-acetylmuramoyl-L-alanyl-D-glutamate--2,6-diaminopimelate ligase (496 aa).

UDP-N-acetyl-alpha-D-muramoyl-L-alanyl-D-glutamate is bound by residues Leu24 and Ser26. Gly109 to Ser115 lines the ATP pocket. UDP-N-acetyl-alpha-D-muramoyl-L-alanyl-D-glutamate-binding positions include Thr151–Thr152, Ser178, Gln184, and Arg186. Position 218 is an N6-carboxylysine (Lys218). Meso-2,6-diaminopimelate contacts are provided by residues Arg387, Asp411–Arg414, Gly462, and Glu466. Residues Asp411–Arg414 carry the Meso-diaminopimelate recognition motif motif.

It belongs to the MurCDEF family. MurE subfamily. Mg(2+) serves as cofactor. Post-translationally, carboxylation is probably crucial for Mg(2+) binding and, consequently, for the gamma-phosphate positioning of ATP.

It localises to the cytoplasm. The enzyme catalyses UDP-N-acetyl-alpha-D-muramoyl-L-alanyl-D-glutamate + meso-2,6-diaminopimelate + ATP = UDP-N-acetyl-alpha-D-muramoyl-L-alanyl-gamma-D-glutamyl-meso-2,6-diaminopimelate + ADP + phosphate + H(+). The protein operates within cell wall biogenesis; peptidoglycan biosynthesis. Its function is as follows. Catalyzes the addition of meso-diaminopimelic acid to the nucleotide precursor UDP-N-acetylmuramoyl-L-alanyl-D-glutamate (UMAG) in the biosynthesis of bacterial cell-wall peptidoglycan. In Pseudomonas putida (strain ATCC 47054 / DSM 6125 / CFBP 8728 / NCIMB 11950 / KT2440), this protein is UDP-N-acetylmuramoyl-L-alanyl-D-glutamate--2,6-diaminopimelate ligase.